The sequence spans 272 residues: Phosphate import ATP-binding protein PstB 1 (272 aa).

In terms of domain architecture, ABC transporter spans 26 to 267; the sequence is ITIENLDLHY…PMKKQTEDYI (242 aa). 58-65 contacts ATP; the sequence is GPSGCGKS.

The protein belongs to the ABC transporter superfamily. Phosphate importer (TC 3.A.1.7) family. In terms of assembly, the complex is composed of two ATP-binding proteins (PstB), two transmembrane proteins (PstC and PstA) and a solute-binding protein (PstS).

It localises to the cell inner membrane. It catalyses the reaction phosphate(out) + ATP + H2O = ADP + 2 phosphate(in) + H(+). In terms of biological role, part of the ABC transporter complex PstSACB involved in phosphate import. Responsible for energy coupling to the transport system. This is Phosphate import ATP-binding protein PstB 1 from Vibrio vulnificus (strain YJ016).